A 226-amino-acid polypeptide reads, in one-letter code: Phosphoribosylformylglycinamidine synthase subunit PurQ (226 aa).

The 224-residue stretch at 3 to 226 (RVAVIRFPGT…FESLVEWCRS (224 aa)) folds into the Glutamine amidotransferase type-1 domain. The Nucleophile role is filled by Cys86. Catalysis depends on residues His199 and Glu201.

Part of the FGAM synthase complex composed of 1 PurL, 1 PurQ and 2 PurS subunits.

The protein localises to the cytoplasm. The catalysed reaction is N(2)-formyl-N(1)-(5-phospho-beta-D-ribosyl)glycinamide + L-glutamine + ATP + H2O = 2-formamido-N(1)-(5-O-phospho-beta-D-ribosyl)acetamidine + L-glutamate + ADP + phosphate + H(+). It catalyses the reaction L-glutamine + H2O = L-glutamate + NH4(+). It functions in the pathway purine metabolism; IMP biosynthesis via de novo pathway; 5-amino-1-(5-phospho-D-ribosyl)imidazole from N(2)-formyl-N(1)-(5-phospho-D-ribosyl)glycinamide: step 1/2. In terms of biological role, part of the phosphoribosylformylglycinamidine synthase complex involved in the purines biosynthetic pathway. Catalyzes the ATP-dependent conversion of formylglycinamide ribonucleotide (FGAR) and glutamine to yield formylglycinamidine ribonucleotide (FGAM) and glutamate. The FGAM synthase complex is composed of three subunits. PurQ produces an ammonia molecule by converting glutamine to glutamate. PurL transfers the ammonia molecule to FGAR to form FGAM in an ATP-dependent manner. PurS interacts with PurQ and PurL and is thought to assist in the transfer of the ammonia molecule from PurQ to PurL. This is Phosphoribosylformylglycinamidine synthase subunit PurQ from Methanopyrus kandleri (strain AV19 / DSM 6324 / JCM 9639 / NBRC 100938).